Reading from the N-terminus, the 293-residue chain is Protease HtpX (293 aa).

Transmembrane regions (helical) follow at residues 4-24 and 38-58; these read IGLFLLTNLAVLVVAGVVLSL and LTNLLIFCAVFGFVGSFISLF. Histidine 145 is a binding site for Zn(2+). Residue glutamate 146 is part of the active site. Histidine 149 is a binding site for Zn(2+). 2 helical membrane passes run 156-176 and 193-213; these read ITLSLIQGVVNTFVMFFARII and IAFFITTIVAELVLGILASMI. Position 222 (glutamate 222) interacts with Zn(2+).

It belongs to the peptidase M48B family. The cofactor is Zn(2+).

Its subcellular location is the cell inner membrane. The protein is Protease HtpX of Cellvibrio japonicus (strain Ueda107) (Pseudomonas fluorescens subsp. cellulosa).